The primary structure comprises 222 residues: RNA-binding protein KhpB (222 aa).

The segment at 2-51 (DMVTVTAKTVEEAVTKALIELQTTSDKLTYEIVEKGSAGFLGIGSKPAII) is jag_N domain. Residues 54–133 (KRKETLQDKA…KSSSDYIRVK (80 aa)) form the KH domain. The R3H domain maps to 138-204 (NYRERRKETL…EEPFRHVIIS (67 aa)).

This sequence belongs to the KhpB RNA-binding protein family. Forms a complex with KhpA. Homodimer or homotrimer.

Its subcellular location is the cytoplasm. A probable RNA chaperone. Forms a complex with KhpA which binds to cellular RNA and controls its expression. Plays a role in peptidoglycan (PG) homeostasis and cell length regulation. The protein is RNA-binding protein KhpB of Clostridium symbiosum (Bacteroides symbiosus).